Consider the following 631-residue polypeptide: Vacuolar-sorting receptor 6 (631 aa).

Positions 1 to 25 are cleaved as a signal peptide; it reads MSLIHKGATLALFLALTMVVNGVFG. The Lumenal portion of the chain corresponds to 26 to 563; that stretch reads RFIVEKSSVT…CIERSGSRIG (538 aa). In terms of domain architecture, PA spans 57–165; it reads NYGGYMIGSV…SFANTLKQAL (109 aa). Residues Asn294 and Asn431 are each glycosylated (N-linked (GlcNAc...) asparagine). EGF-like domains follow at residues 413–463 and 494–540; these read ETNE…TSCE and ETSG…FECK. Disulfide bonds link Cys417-Cys435, Cys424-Cys444, Cys446-Cys462, Cys498-Cys511, and Cys530-Cys539. Residues 564 to 584 form a helical membrane-spanning segment; the sequence is WFPTFVILAAVASICVGGYVF. The Cytoplasmic portion of the chain corresponds to 585-631; sequence YKYRLRSYMDSEIMAIMSQYMPLESQNTTDPMTGESQHQQLRLTSAA. Positions 604-607 match the Tyrosine-based internalization motif motif; the sequence is YMPL. A disordered region spans residues 610 to 631; it reads QNTTDPMTGESQHQQLRLTSAA.

The protein belongs to the VSR (BP-80) family. In terms of tissue distribution, expressed in seedlings, roots, leaves, flowers and siliques.

It localises to the membrane. The protein localises to the golgi apparatus membrane. It is found in the cytoplasmic vesicle. The protein resides in the clathrin-coated vesicle membrane. Its subcellular location is the prevacuolar compartment membrane. In terms of biological role, vacuolar-sorting receptor (VSR) involved in clathrin-coated vesicles sorting from Golgi apparatus to vacuoles. This chain is Vacuolar-sorting receptor 6 (VSR6), found in Arabidopsis thaliana (Mouse-ear cress).